A 36-amino-acid chain; its full sequence is Beta-amanitin proprotein (36 aa).

Residues 1 to 10 (MSDINATRLP) constitute a propeptide that is removed on maturation. A cross-link (cyclopeptide (Ile-Pro)) is located at residues 11 to 18 (IWGIGCDP). The 2'-cysteinyl-6'-hydroxytryptophan sulfoxide (Trp-Cys) cross-link spans 12-16 (WGIGC). Positions 19–36 (CIGDDVTALLTRGEASLC) are excised as a propeptide.

This sequence belongs to the MSDIN fungal toxin family. Post-translationally, processed by the macrocyclase-peptidase enzyme POPB to yield a toxic cyclic decapeptide. POPB first removes 10 residues from the N-terminus. Conformational trapping of the remaining peptide forces the enzyme to release this intermediate rather than proceed to macrocyclization. The enzyme rebinds the remaining peptide in a different conformation and catalyzes macrocyclization of the N-terminal 8 residues.

Its function is as follows. Toxin belonging to the bicyclic octapeptides amatoxins that acts by binding non-competitively to RNA polymerase II and greatly slowing the elongation of transcripts from target promoters. This Amanita phalloides (Death cap) protein is Beta-amanitin proprotein.